The chain runs to 759 residues: TIR domain-containing adapter molecule 1 (759 aa).

Positions 1–153 are TRIF-NTD; the sequence is MACTGPSLSG…CGWDVLGDLG (153 aa). A TRAF6-binding motif is present at residues 84–91; sequence ETPEEPPD. The short motif at 207-210 is the pLxIS motif element; it reads LEIS. Residue Ser210 is modified to Phosphoserine. Lys229 is covalently cross-linked (Glycyl lysine isopeptide (Lys-Gly) (interchain with G-Cter in ubiquitin)). Residues 241-296 form a disordered region; the sequence is EPAPMGCQEPEEMSWPPSVEAADSPVRPSSPGPGLPEVTTDACPASPHDPPEVPEI. 2 short sequence motifs (TRAF6-binding) span residues 248–255 and 299–309; these read QEPEEMSW and HYPVECTDVPA. The tract at residues 340 to 426 is disordered; it reads LSAQPRPPTP…PEPPPPELES (87 aa). Over residues 351–365 the composition is skewed to low complexity; sequence VPQTSPSFPSASTSP. Over residues 366-376 the composition is skewed to pro residues; that stretch reads FPSPSTPPEAH. Residues 430 to 590 form the TIR domain; sequence KFYNFVVLHA…QDARALREQS (161 aa). The interval 549–759 is sufficient to induce apoptosis; sequence LLDEHSKIFA…APEDNTRETE (211 aa). The disordered stretch occupies residues 642 to 723; sequence GQGSLGTPPS…PPARPQSPGL (82 aa). Pro residues predominate over residues 659–705; sequence HQPPPLPPWLGGTPPPIFPQPPQTFPQPPPTFPQPPPTFQQPPPACP.

As to quaternary structure, homodimer. Found in a multi-helicase-TICAM1 complex at least composed of DHX36, DDX1, DDX21 and TICAM1; this complex exists in resting cells with or without poly(I:C) RNA ligand stimulation. Interacts (via TIR domain) with DDX21 (via C-terminus). Interacts (via TIR domain) with DHX36 (via C-terminus). Interacts with AZI2 and IRF7. Interacts with TICAM2 in TLR4 recruitment. Interaction with PIAS4 inhibits the TICAM1-induced NF-kappa-B, IRF and IFNB1 activation. Interacts with IKBKB and IKBKE. Interaction with SARM1 blocks TICAM1-dependent transcription factor activation. Interacts with TRAF3. Interacts (when phosphorylated) with IRF3; following activation and phosphorylation on the pLxIS motif by TBK1, recruits IRF3. Interacts with TBK1, TRAF6 and RIPK1 and these interactions are enhanced in the presence of WDFY1. Interacts with TRAFD1. Interacts with UBQLN1 (via UBA domain). Interacts with TLR4 in response to LPS in a WDFY1-dependent manner. Interacts with WDFY1 in response to poly(I:C). Interacts (via the TIR domain) with TLR3 in response to poly(I:C) and this interaction is enhanced in the presence of WDFY1. Interacts with TRIM56. Component of a multi-helicase-TICAM1 complex that acts as a cytoplasmic sensor of viral double-stranded RNA (dsRNA) and plays a role in the activation of a cascade of antiviral responses including the induction of pro-inflammatory cytokines. Interacts (via the TIR domain) with TLR5. Interacts with TRIM8. Interacts with TAX1BP1 and TRIM32; these interactions target TICAM1 to TAX1BP1-mediated selective autophagic degradation. Interacts with DDX50. Post-translationally, phosphorylated by TBK1. Following activation, phosphorylated by TBK1 at Ser-210 in the pLxIS motif. The phosphorylated pLxIS motif constitutes an IRF3-binding motif, leading to recruitment of the transcription factor IRF3 to induce type-I interferons and other cytokines. Polyubiquitinated at Lys-229 by TRIM38 with 'Lys-48'-linked chains, leading to proteasomal degradation. Polyubiquitinated with 'Lys-6' and 'Lys-33'-linked chains in a TRIM8-dependent manner.

It is found in the cytoplasmic vesicle. It localises to the autophagosome. Its subcellular location is the cytoplasm. The protein resides in the cytosol. The protein localises to the mitochondrion. Involved in innate immunity against invading pathogens. Adapter used by TLR3, TLR4 (through TICAM2) and TLR5 to mediate NF-kappa-B and interferon-regulatory factor (IRF) activation, and to induce apoptosis. Ligand binding to these receptors results in TRIF recruitment through its TIR domain. Distinct protein-interaction motifs allow recruitment of the effector proteins TBK1, TRAF6 and RIPK1, which in turn, lead to the activation of transcription factors IRF3 and IRF7, NF-kappa-B and FADD respectively. Phosphorylation by TBK1 on the pLxIS motif leads to recruitment and subsequent activation of the transcription factor IRF3 to induce expression of type I interferon and exert a potent immunity against invading pathogens. Component of a multi-helicase-TICAM1 complex that acts as a cytoplasmic sensor of viral double-stranded RNA (dsRNA) and plays a role in the activation of a cascade of antiviral responses including the induction of pro-inflammatory cytokines. This Bos taurus (Bovine) protein is TIR domain-containing adapter molecule 1 (TICAM1).